The primary structure comprises 486 residues: Glutamyl-tRNA(Gln) amidotransferase subunit A (486 aa).

Residues Lys-78 and Ser-153 each act as charge relay system in the active site. The active-site Acyl-ester intermediate is Ser-177.

The protein belongs to the amidase family. GatA subfamily. Heterotrimer of A, B and C subunits.

It catalyses the reaction L-glutamyl-tRNA(Gln) + L-glutamine + ATP + H2O = L-glutaminyl-tRNA(Gln) + L-glutamate + ADP + phosphate + H(+). Its function is as follows. Allows the formation of correctly charged Gln-tRNA(Gln) through the transamidation of misacylated Glu-tRNA(Gln) in organisms which lack glutaminyl-tRNA synthetase. The reaction takes place in the presence of glutamine and ATP through an activated gamma-phospho-Glu-tRNA(Gln). The protein is Glutamyl-tRNA(Gln) amidotransferase subunit A of Desulfosudis oleivorans (strain DSM 6200 / JCM 39069 / Hxd3) (Desulfococcus oleovorans).